Reading from the N-terminus, the 500-residue chain is L-arabinose isomerase (500 aa).

The Mn(2+) site is built by glutamate 306, glutamate 333, histidine 350, and histidine 450.

Belongs to the arabinose isomerase family. In terms of assembly, homohexamer. The cofactor is Mn(2+).

It catalyses the reaction beta-L-arabinopyranose = L-ribulose. The protein operates within carbohydrate degradation; L-arabinose degradation via L-ribulose; D-xylulose 5-phosphate from L-arabinose (bacterial route): step 1/3. Catalyzes the conversion of L-arabinose to L-ribulose. This Yersinia pseudotuberculosis serotype I (strain IP32953) protein is L-arabinose isomerase.